The sequence spans 498 residues: ATP synthase subunit beta, chloroplastic (498 aa).

172–179 (GGAGVGKT) contributes to the ATP binding site.

The protein belongs to the ATPase alpha/beta chains family. In terms of assembly, F-type ATPases have 2 components, CF(1) - the catalytic core - and CF(0) - the membrane proton channel. CF(1) has five subunits: alpha(3), beta(3), gamma(1), delta(1), epsilon(1). CF(0) has four main subunits: a(1), b(1), b'(1) and c(9-12).

The protein localises to the plastid. It is found in the chloroplast thylakoid membrane. It catalyses the reaction ATP + H2O + 4 H(+)(in) = ADP + phosphate + 5 H(+)(out). In terms of biological role, produces ATP from ADP in the presence of a proton gradient across the membrane. The catalytic sites are hosted primarily by the beta subunits. The chain is ATP synthase subunit beta, chloroplastic from Saruma henryi (Upright wild ginger).